The primary structure comprises 120 residues: Large ribosomal subunit protein bL20 (120 aa).

This sequence belongs to the bacterial ribosomal protein bL20 family.

Functionally, binds directly to 23S ribosomal RNA and is necessary for the in vitro assembly process of the 50S ribosomal subunit. It is not involved in the protein synthesizing functions of that subunit. The protein is Large ribosomal subunit protein bL20 of Ureaplasma urealyticum serovar 10 (strain ATCC 33699 / Western).